We begin with the raw amino-acid sequence, 37 residues long: Esculentin-2A (37 aa).

Residues Cys31 and Cys37 are joined by a disulfide bond.

Belongs to the frog skin active peptide (FSAP) family. Esculentin subfamily. Expressed by the skin glands.

Its subcellular location is the secreted. In terms of biological role, shows antibacterial activity against representative Gram-negative and Gram-positive bacterial species, and hemolytic activity. This chain is Esculentin-2A, found in Pelophylax lessonae (Pool frog).